The chain runs to 213 residues: Small ribosomal subunit protein uS7 (213 aa).

The protein belongs to the universal ribosomal protein uS7 family. In terms of assembly, component of the small ribosomal subunit (SSU). Mature N.crassa ribosomes consist of a small (40S) and a large (60S) subunit. The 40S small subunit contains 1 molecule of ribosomal RNA (18S rRNA) and at least 32 different proteins. The large 60S subunit contains 3 rRNA molecules (26S, 5.8S and 5S rRNA) and at least 42 different proteins.

The protein localises to the cytoplasm. Functionally, component of the ribosome, a large ribonucleoprotein complex responsible for the synthesis of proteins in the cell. The small ribosomal subunit (SSU) binds messenger RNAs (mRNAs) and translates the encoded message by selecting cognate aminoacyl-transfer RNA (tRNA) molecules. The large subunit (LSU) contains the ribosomal catalytic site termed the peptidyl transferase center (PTC), which catalyzes the formation of peptide bonds, thereby polymerizing the amino acids delivered by tRNAs into a polypeptide chain. The nascent polypeptides leave the ribosome through a tunnel in the LSU and interact with protein factors that function in enzymatic processing, targeting, and the membrane insertion of nascent chains at the exit of the ribosomal tunnel. The sequence is that of Small ribosomal subunit protein uS7 (rps-5) from Neurospora crassa (strain ATCC 24698 / 74-OR23-1A / CBS 708.71 / DSM 1257 / FGSC 987).